A 188-amino-acid polypeptide reads, in one-letter code: Phosphatidylcholine-sterol acyltransferase (188 aa).

N20 is a glycosylation site (N-linked (GlcNAc...) asparagine). The active-site Charge relay system is H169.

It belongs to the AB hydrolase superfamily. Lipase family. Detected in blood plasma (at protein level).

It is found in the secreted. The enzyme catalyses a sterol + a 1,2-diacyl-sn-glycero-3-phosphocholine = a sterol ester + a 1-acyl-sn-glycero-3-phosphocholine. It carries out the reaction a 1-O-alkyl-2-acetyl-sn-glycero-3-phosphocholine + H2O = a 1-O-alkyl-sn-glycero-3-phosphocholine + acetate + H(+). The catalysed reaction is a 1-hexadecanoyl-2-acyl-sn-glycero-3-phosphocholine + (24S)-hydroxycholesterol = (24S)-24-hydroxycholesterol ester + 1-hexadecanoyl-sn-glycero-3-phosphocholine. It catalyses the reaction (24S)-hydroxycholesterol + 1-hexadecanoyl-2-(9Z,12Z-octadecadienoyl)-sn-glycero-3-phosphocholine = (24S)-hydroxycholesterol 3-linoleoate + 1-hexadecanoyl-sn-glycero-3-phosphocholine. The enzyme catalyses 1-hexadecanoyl-2-(5Z,8Z,11Z,14Z-eicosatetraenoyl)-sn-glycero-3-phosphocholine + cholesterol = cholesteryl (5Z,8Z,11Z,14Z)-eicosatetraenoate + 1-hexadecanoyl-sn-glycero-3-phosphocholine. It carries out the reaction 1-hexadecanoyl-2-(9Z-octadecenoyl)-sn-glycero-3-phosphocholine + cholesterol = cholesteryl (9Z-octadecenoate) + 1-hexadecanoyl-sn-glycero-3-phosphocholine. The catalysed reaction is 1-hexadecanoyl-2-(8Z,11Z,14Z-eicosatrienoyl)-sn-glycero-3-phosphocholine + cholesterol = cholesteryl (8Z,11Z,14Z)-eicosatrienoate + 1-hexadecanoyl-sn-glycero-3-phosphocholine. It catalyses the reaction 1-hexadecanoyl-2-(5Z,8Z,11Z-eicosatrienoyl)-sn-glycero-3-phosphocholine + cholesterol = cholesteryl (5Z,8Z,11Z)-eicosatrienoate + 1-hexadecanoyl-sn-glycero-3-phosphocholine. The enzyme catalyses 1-hexadecanoyl-2-(5Z,8Z,11Z,14Z,17Z-eicosapentaenoyl)-sn-glycero-3-phosphocholine + cholesterol = (5Z,8Z,11Z,14Z,17Z-eicosapentaenoyl)-cholesterol + 1-hexadecanoyl-sn-glycero-3-phosphocholine. It carries out the reaction 1-hexadecanoyl-2-(9Z,12Z-octadecadienoyl)-sn-glycero-3-phosphocholine + cholesterol = cholesteryl (9Z,12Z)-octadecadienoate + 1-hexadecanoyl-sn-glycero-3-phosphocholine. The catalysed reaction is 1-hexadecanoyl-2-(6Z,9Z,12Z-octadecatrienoyl)-sn-glycero-3-phosphocholine + cholesterol = (6Z,9Z,12Z-octadecatrienoyl)-cholesterol + 1-hexadecanoyl-sn-glycero-3-phosphocholine. It catalyses the reaction 1-hexadecanoyl-2-(11Z,14Z,17Z-eicosatrienoyl)-sn-glycero-3-phosphocholine + cholesterol = (11Z,14Z,17Z-eicosatrienoyl)-cholesterol + 1-hexadecanoyl-sn-glycero-3-phosphocholine. The enzyme catalyses 1-hexadecanoyl-2-(9Z,12Z,15Z-octadecatrienoyl)-sn-glycero-3-phosphocholine + cholesterol = (9Z,12Z,15Z-octadecatrienoyl)-cholesterol + 1-hexadecanoyl-sn-glycero-3-phosphocholine. It carries out the reaction 1-hexadecanoyl-2-(9Z,12Z-octadecadienoyl)-sn-glycero-3-phosphocholine + H2O = (9Z,12Z)-octadecadienoate + 1-hexadecanoyl-sn-glycero-3-phosphocholine + H(+). The catalysed reaction is 1-hexadecanoyl-2-(5Z,8Z,11Z,14Z-eicosatetraenoyl)-sn-glycero-3-phosphocholine + H2O = 1-hexadecanoyl-sn-glycero-3-phosphocholine + (5Z,8Z,11Z,14Z)-eicosatetraenoate + H(+). It catalyses the reaction a 1-O-alkyl-2-acetyl-sn-glycero-3-phosphocholine + 1-hexadecanoyl-sn-glycero-3-phosphocholine = 1-hexadecanoyl-2-acetyl-sn-glycero-3-phosphocholine + a 1-O-alkyl-sn-glycero-3-phosphocholine. Functionally, central enzyme in the extracellular metabolism of plasma lipoproteins. Synthesized mainly in the liver and secreted into plasma where it converts cholesterol and phosphatidylcholines (lecithins) to cholesteryl esters and lysophosphatidylcholines on the surface of high and low density lipoproteins (HDLs and LDLs). The cholesterol ester is then transported back to the liver. Also produced in the brain by primary astrocytes, and esterifies free cholesterol on nascent APOE-containing lipoproteins secreted from glia and influences cerebral spinal fluid (CSF) APOE- and APOA1 levels. Together with APOE and the cholesterol transporter ABCA1, plays a key role in the maturation of glial-derived, nascent lipoproteins. Required for remodeling high-density lipoprotein particles into their spherical forms. Has a preference for plasma 16:0-18:2 or 18:O-18:2 phosphatidylcholines. Catalyzes the hydrolysis of 1-O-alkyl-2-acetyl-sn-glycero-3-phosphocholine (platelet-activating factor or PAF) to 1-O-alkyl-sn-glycero-3-phosphocholine (lyso-PAF). Also catalyzes the transfer of the acetate group from PAF to 1-hexadecanoyl-sn-glycero-3-phosphocholine forming lyso-PAF. Catalyzes the esterification of (24S)-hydroxycholesterol (24(S)OH-C), also known as cerebrosterol to produce 24(S)OH-C monoesters. The chain is Phosphatidylcholine-sterol acyltransferase (LCAT) from Sus scrofa (Pig).